Reading from the N-terminus, the 151-residue chain is MSVERTFLAIKPDGVQRGLVGEILGRFERKGFKLVGLKQLIPSKELAEKHYGVHKERPFFTGLVGFITSGPVVAMVWEGDGVILSARKLIGATKPLEAEPGTIRGDLGINIGRNVIHGSDGPETASFEIDLWFNSSELNNWNPSDQKWRVE.

ATP-binding residues include K11, F59, R87, T93, R104, and N114. Catalysis depends on H117, which acts as the Pros-phosphohistidine intermediate.

Belongs to the NDK family. In terms of assembly, homotetramer. Mg(2+) is required as a cofactor.

Its subcellular location is the cytoplasm. The enzyme catalyses a 2'-deoxyribonucleoside 5'-diphosphate + ATP = a 2'-deoxyribonucleoside 5'-triphosphate + ADP. The catalysed reaction is a ribonucleoside 5'-diphosphate + ATP = a ribonucleoside 5'-triphosphate + ADP. In terms of biological role, major role in the synthesis of nucleoside triphosphates other than ATP. The ATP gamma phosphate is transferred to the NDP beta phosphate via a ping-pong mechanism, using a phosphorylated active-site intermediate. The protein is Nucleoside diphosphate kinase of Prochlorococcus marinus (strain SARG / CCMP1375 / SS120).